The primary structure comprises 651 residues: Acetyl-coenzyme A synthetase 1 (651 aa).

CoA is bound by residues 191–194, T311, and N335; that span reads RGGK. ATP is bound by residues 387-389, 411-416, D500, and R515; these read GEP and DTWWQT. CoA is bound at residue S523. R526 lines the ATP pocket. Mg(2+) is bound by residues V537, H539, and V542. Position 584 (R584) interacts with CoA. Position 609 is an N6-acetyllysine (K609).

The protein belongs to the ATP-dependent AMP-binding enzyme family. Mg(2+) is required as a cofactor. Post-translationally, acetylated. Deacetylation by the SIR2-homolog deacetylase activates the enzyme.

It catalyses the reaction acetate + ATP + CoA = acetyl-CoA + AMP + diphosphate. Functionally, catalyzes the conversion of acetate into acetyl-CoA (AcCoA), an essential intermediate at the junction of anabolic and catabolic pathways. AcsA undergoes a two-step reaction. In the first half reaction, AcsA combines acetate with ATP to form acetyl-adenylate (AcAMP) intermediate. In the second half reaction, it can then transfer the acetyl group from AcAMP to the sulfhydryl group of CoA, forming the product AcCoA. The protein is Acetyl-coenzyme A synthetase 1 of Pseudomonas aeruginosa (strain ATCC 15692 / DSM 22644 / CIP 104116 / JCM 14847 / LMG 12228 / 1C / PRS 101 / PAO1).